A 124-amino-acid chain; its full sequence is Large ribosomal subunit protein uL18 (124 aa).

Belongs to the universal ribosomal protein uL18 family. Part of the 50S ribosomal subunit; part of the 5S rRNA/L5/L18/L25 subcomplex. Contacts the 5S and 23S rRNAs.

Its function is as follows. This is one of the proteins that bind and probably mediate the attachment of the 5S RNA into the large ribosomal subunit, where it forms part of the central protuberance. In Caldicellulosiruptor saccharolyticus (strain ATCC 43494 / DSM 8903 / Tp8T 6331), this protein is Large ribosomal subunit protein uL18.